The sequence spans 477 residues: MALRLFNTMSHQKEEFKPREEGKVGMYTCGPTVYNYFHVGNGRMLVVFDMIRRYLLYKGYDVTFVQNFTDIDDKIIKRGQEEGRDPLELAQDYIGEYFKDAAALNLMPASIHPKATDHIPEMIEIIKGLEEQGLAYAVDGDVYFAVDKLPAYGKLSGRTLEDMQAGARVEVGERKQNPMDFALWKNAKPGEPFWESPWGKGRPGWHIECSAMSLKYLGSGFDIHGGGGDLVFPHHENEIAQAEGYLHGETFARYWMHNAFLTINQQKMSKSLGNFFTVREILEHFPGEVIRFYLLGTHYRSPLDFDDENLQMAQKGLERLQTSIRLADEALGRQGQNSADAASGQKLRAAAEEARREFAEAMDDDFNSALAYASLFELGKAINAHVQAYPYSSEGLLKARATLWELADVLGFDLAKPANQAEAGNQKLDQVMELLLEVRAIARKKKDWEMSDLIRDRLKDLGIVLEDTPQGARWTLK.

Cysteine 29 lines the Zn(2+) pocket. Residues 31–41 carry the 'HIGH' region motif; it reads PTVYNYFHVGN. Cysteine 209, histidine 234, and glutamate 238 together coordinate Zn(2+). A 'KMSKS' region motif is present at residues 267–271; sequence KMSKS. Lysine 270 serves as a coordination point for ATP.

This sequence belongs to the class-I aminoacyl-tRNA synthetase family. In terms of assembly, monomer. Zn(2+) is required as a cofactor.

The protein resides in the cytoplasm. It carries out the reaction tRNA(Cys) + L-cysteine + ATP = L-cysteinyl-tRNA(Cys) + AMP + diphosphate. The protein is Cysteine--tRNA ligase of Desulfitobacterium hafniense (strain DSM 10664 / DCB-2).